Reading from the N-terminus, the 180-residue chain is Ribosome-recycling factor (180 aa).

A disordered region spans residues 135 to 156 (SDLKKDNDLSEDSRHRTEDDIQ).

It belongs to the RRF family.

The protein resides in the cytoplasm. Responsible for the release of ribosomes from messenger RNA at the termination of protein biosynthesis. May increase the efficiency of translation by recycling ribosomes from one round of translation to another. The sequence is that of Ribosome-recycling factor from Oenococcus oeni (strain ATCC BAA-331 / PSU-1).